We begin with the raw amino-acid sequence, 1314 residues long: Angiotensin-converting enzyme (1314 aa).

The first 35 residues, M1–A35, serve as a signal peptide directing secretion. Topologically, residues L36–Q1265 are extracellular. N44, N60, N80, N117, and N166 each carry an N-linked (GlcNAc...) asparagine glycan. 2 Peptidase M2 domains span residues S46–P630 and V649–P1228. The cysteines at positions 163 and 171 are disulfide-linked. A chloride-binding site is contributed by Y237. N324 carries N-linked (GlcNAc...) asparagine glycosylation. C365 and C383 are oxidised to a cystine. H396 provides a ligand contact to Zn(2+). E397 (proton acceptor 1) is an active-site residue. Zn(2+)-binding residues include H400 and E424. An N-linked (GlcNAc...) asparagine glycan is attached at N515. Catalysis depends on H526, which acts as the Proton donor 1. R535 is a binding site for chloride. Cysteines 551 and 563 form a disulfide. N-linked (GlcNAc...) asparagine glycosylation is found at N683, N701, N720, and N766. C763 and C769 are joined by a disulfide. Residues R797 and Y835 each coordinate chloride. N-linked (GlcNAc...) asparagine glycosylation is present at N948. C963 and C981 form a disulfide bridge. H994 is a binding site for Zn(2+). Catalysis depends on E995, which acts as the Proton acceptor 2. Residues H998 and E1022 each contribute to the Zn(2+) site. Chloride is bound by residues W1096 and R1100. H1124 acts as the Proton donor 2 in catalysis. A chloride-binding site is contributed by R1133. C1149 and C1161 form a disulfide bridge. N-linked (GlcNAc...) asparagine glycosylation is present at N1197. Positions H1221–R1262 are juxtamembrane stalk. Residues W1266–L1282 form a helical membrane-spanning segment. The Cytoplasmic portion of the chain corresponds to T1283–S1314. The disordered stretch occupies residues G1293 to S1314. S1307 carries the post-translational modification Phosphoserine.

It belongs to the peptidase M2 family. Monomer and homodimer; homodimerizes following binding to an inhibitor. Interacts with calmodulin (CALM1, CALM2 or CALM3); interaction takes place in the cytoplasmic region and regulates phosphorylation and proteolytic cleavage. The cofactor is Zn(2+). Chloride is required as a cofactor. Post-translationally, produced following proteolytic cleavage by secretase enzymes that cleave the transmembrane form in the juxtamembrane stalk region upstream of the transmembrane region. Cleavage can take place at different sites of the juxtamembrane stalk region. Phosphorylated by CK2 on Ser-1307; which allows membrane retention. Phosphorylated on tyrosine residues on its extracellular part, promoting cleavage by secretase enzymes and formation of the soluble form (Angiotensin-converting enzyme, soluble form). Widely expressed with dominant expression in lung and kidney.

The protein localises to the cell membrane. It is found in the cytoplasm. Its subcellular location is the secreted. The enzyme catalyses Release of a C-terminal dipeptide, oligopeptide-|-Xaa-Yaa, when Xaa is not Pro, and Yaa is neither Asp nor Glu. Thus, conversion of angiotensin I to angiotensin II, with increase in vasoconstrictor activity, but no action on angiotensin II.. It catalyses the reaction angiotensin I + H2O = L-histidyl-L-leucine + angiotensin II. The catalysed reaction is bradykinin + H2O = L-Phe-L-Arg + bradykinin(1-7). It carries out the reaction substance P + H2O = substance P(1-9) + L-Leu-L-Met-NH2. The enzyme catalyses substance P + H2O = substance P(1-8) + Gly-L-Leu-L-Met-NH2. It catalyses the reaction substance P + H2O = L-Phe-L-Phe-Gly-L-Leu-L-Met-NH2 + substance P(1-6). The catalysed reaction is neurotensin + H2O = neurotensin(1-11) + L-isoleucyl-L-leucine. It carries out the reaction goralatide + H2O = N-acetyl-L-seryl-L-aspartate + L-lysyl-L-proline. The enzyme catalyses Met-enkephalin + H2O = L-phenylalanyl-L-methionine + L-tyrosylglycylglycine. It catalyses the reaction Leu-enkephalin + H2O = L-tyrosylglycylglycine + L-phenylalanyl-L-leucine. The catalysed reaction is Met-enkephalin-Arg-Phe + H2O = L-arginyl-L-phenylalanine + Met-enkephalin. The dipeptidyl carboxypeptidase activity is strongly activated by chloride. The dipeptidyl carboxypeptidase activity is specifically inhibited by lisinopril, captopril and enalaprilat. With respect to regulation, strongly inhibited by lisinopril and captopril. Its function is as follows. Dipeptidyl carboxypeptidase that removes dipeptides from the C-terminus of a variety of circulating hormones, such as angiotensin I, bradykinin or enkephalins, thereby playing a key role in the regulation of blood pressure, electrolyte homeostasis or synaptic plasticity. Composed of two similar catalytic domains, each possessing a functional active site, with different selectivity for substrates. Plays a major role in the angiotensin-renin system that regulates blood pressure and sodium retention by the kidney by converting angiotensin I to angiotensin II, resulting in an increase of the vasoconstrictor activity of angiotensin. Also able to inactivate bradykinin, a potent vasodilator, and therefore enhance the blood pressure response. Acts as a regulator of synaptic transmission by mediating cleavage of neuropeptide hormones, such as substance P, neurotensin or enkephalins. Catalyzes degradation of different enkephalin neuropeptides (Met-enkephalin, Leu-enkephalin, Met-enkephalin-Arg-Phe and possibly Met-enkephalin-Arg-Gly-Leu). Acts as a regulator of synaptic plasticity in the nucleus accumbens of the brain by mediating cleavage of Met-enkephalin-Arg-Phe, a strong ligand of Mu-type opioid receptor OPRM1, into Met-enkephalin. Met-enkephalin-Arg-Phe cleavage by ACE decreases activation of OPRM1, leading to long-term synaptic potentiation of glutamate release. Also acts as a regulator of hematopoietic stem cell differentiation by mediating degradation of hemoregulatory peptide N-acetyl-SDKP (AcSDKP). Acts as a regulator of cannabinoid signaling pathway by mediating degradation of hemopressin, an antagonist peptide of the cannabinoid receptor CNR1. Involved in amyloid-beta metabolism by catalyzing degradation of Amyloid-beta protein 40 and Amyloid-beta protein 42 peptides, thereby preventing plaque formation. Catalyzes cleavage of cholecystokinin (maturation of Cholecystokinin-8 and Cholecystokinin-5) and Gonadoliberin-1 (both maturation and degradation) hormones. Degradation of hemoregulatory peptide N-acetyl-SDKP (AcSDKP) and amyloid-beta proteins is mediated by the N-terminal catalytic domain, while angiotensin I and cholecystokinin cleavage is mediated by the C-terminal catalytic region. In terms of biological role, soluble form that is released in blood plasma and other body fluids following proteolytic cleavage in the juxtamembrane stalk region. Isoform produced by alternative promoter usage that is specifically expressed in spermatocytes and adult testis, and which is required for male fertility. In contrast to somatic isoforms, only contains one catalytic domain. Acts as a dipeptidyl carboxypeptidase that removes dipeptides from the C-terminus of substrates. The identity of substrates that are needed for male fertility is unknown. May also have a glycosidase activity which releases GPI-anchored proteins from the membrane by cleaving the mannose linkage in the GPI moiety. The GPIase activity was reported to be essential for the egg-binding ability of the sperm. This activity is however unclear and has been challenged by other groups, suggesting that it may be indirect. The polypeptide is Angiotensin-converting enzyme (Mesocricetus auratus (Golden hamster)).